The chain runs to 62 residues: Large ribosomal subunit protein eL19 (62 aa).

It belongs to the eukaryotic ribosomal protein eL19 family.

The protein is Large ribosomal subunit protein eL19 (RPL19) of Zea mays (Maize).